The sequence spans 510 residues: Nectin-4 (510 aa).

A signal peptide spans Met-1–Ala-31. The Ig-like V-type domain occupies Gly-32–Arg-144. The Extracellular portion of the chain corresponds to Gly-32–Ser-349. Disulfide bonds link Cys-52-Cys-127, Cys-171-Cys-223, and Cys-270-Cys-315. 2 consecutive Ig-like C2-type domains span residues Pro-148 to Thr-237 and Ala-248 to Asp-331. The N-linked (GlcNAc...) asparagine glycan is linked to Asn-281. A helical transmembrane segment spans residues Val-350–Leu-370. Over Met-371–Val-510 the chain is Cytoplasmic. The span at Arg-400–Pro-412 shows a compositional bias: basic and acidic residues. The disordered stretch occupies residues Arg-400 to Asp-475.

This sequence belongs to the nectin family. Self-associates. Interacts via its Ig-like V-type domain with NECTIN1 Ig-like V-type domain. Interacts via its C-terminus with AFDN. Interacts with TIGIT.

It localises to the cell membrane. It is found in the cell junction. The protein resides in the adherens junction. Its function is as follows. Seems to be involved in cell adhesion through trans-homophilic and -heterophilic interactions, the latter including specifically interactions with NECTIN1. Plays a role in the senescence-associated cell size enlargement via SFK/PI3K/Rac1 and thus promotes senescent cell survival. Also participates in the innate immune response by acting as a ligand for the receptor TIGIT to inhibit NK-cell activity. This chain is Nectin-4, found in Bos taurus (Bovine).